The chain runs to 456 residues: tRNA-2-methylthio-N(6)-dimethylallyladenosine synthase (456 aa).

Positions 1–116 (MTYFFETYGC…FESIFQEIEQ (116 aa)) constitute an MTTase N-terminal domain. C10, C46, C79, C162, C166, and C169 together coordinate [4Fe-4S] cluster. Residues 148–384 (SEGSFQSFIP…IALQMSTTLK (237 aa)) enclose the Radical SAM core domain. The region spanning 387–452 (RARVGKTLPV…GRTLRAHLVQ (66 aa)) is the TRAM domain.

Belongs to the methylthiotransferase family. MiaB subfamily. Monomer. It depends on [4Fe-4S] cluster as a cofactor.

It is found in the cytoplasm. It carries out the reaction N(6)-dimethylallyladenosine(37) in tRNA + (sulfur carrier)-SH + AH2 + 2 S-adenosyl-L-methionine = 2-methylsulfanyl-N(6)-dimethylallyladenosine(37) in tRNA + (sulfur carrier)-H + 5'-deoxyadenosine + L-methionine + A + S-adenosyl-L-homocysteine + 2 H(+). Catalyzes the methylthiolation of N6-(dimethylallyl)adenosine (i(6)A), leading to the formation of 2-methylthio-N6-(dimethylallyl)adenosine (ms(2)i(6)A) at position 37 in tRNAs that read codons beginning with uridine. This chain is tRNA-2-methylthio-N(6)-dimethylallyladenosine synthase, found in Treponema pallidum (strain Nichols).